Here is a 311-residue protein sequence, read N- to C-terminus: Porphobilinogen deaminase (311 aa).

Cysteine 241 carries the post-translational modification S-(dipyrrolylmethanemethyl)cysteine.

This sequence belongs to the HMBS family. In terms of assembly, monomer. Requires dipyrromethane as cofactor.

It carries out the reaction 4 porphobilinogen + H2O = hydroxymethylbilane + 4 NH4(+). Its pathway is porphyrin-containing compound metabolism; protoporphyrin-IX biosynthesis; coproporphyrinogen-III from 5-aminolevulinate: step 2/4. Functionally, tetrapolymerization of the monopyrrole PBG into the hydroxymethylbilane pre-uroporphyrinogen in several discrete steps. The sequence is that of Porphobilinogen deaminase (hemC) from Halalkalibacterium halodurans (strain ATCC BAA-125 / DSM 18197 / FERM 7344 / JCM 9153 / C-125) (Bacillus halodurans).